The following is a 101-amino-acid chain: Capsid assembly scaffolding protein (101 aa).

Residues 1–24 (MPMERDSHEEILNKLNDPELEHSE) form a disordered region. Positions 79-99 (EEIKQEELSETITIEDLEKQA) form a coiled coil.

This sequence belongs to the phi29likevirus scaffolding protein family. As to quaternary structure, homodimer. Interacts non-specifically with DNA; probably binds DNA in the early stages of DNA packaging.

In terms of biological role, scaffolding protein involved in the icosahedric procapsid assembly. Coassembles with the capsid proteins to form the procapsid. The scaffolding protein is found within the capsid as a serie of concentric shells. During DNA packaging, the scaffolding protein molecules are released from the procapsid. The protein is Capsid assembly scaffolding protein (7) of Bacillus subtilis (Bacteriophage B103).